Reading from the N-terminus, the 71-residue chain is uncharacterized protein (71 aa).

This is an uncharacterized protein from Acheta domesticus (House cricket).